A 217-amino-acid chain; its full sequence is Peptide methionine sulfoxide reductase MsrA (217 aa).

Residue Cys-56 is part of the active site.

Belongs to the MsrA Met sulfoxide reductase family.

The enzyme catalyses L-methionyl-[protein] + [thioredoxin]-disulfide + H2O = L-methionyl-(S)-S-oxide-[protein] + [thioredoxin]-dithiol. The catalysed reaction is [thioredoxin]-disulfide + L-methionine + H2O = L-methionine (S)-S-oxide + [thioredoxin]-dithiol. In terms of biological role, has an important function as a repair enzyme for proteins that have been inactivated by oxidation. Catalyzes the reversible oxidation-reduction of methionine sulfoxide in proteins to methionine. The protein is Peptide methionine sulfoxide reductase MsrA of Rippkaea orientalis (strain PCC 8801 / RF-1) (Cyanothece sp. (strain PCC 8801)).